We begin with the raw amino-acid sequence, 203 residues long: CASP-like protein 5A2 (203 aa).

Residues 1 to 63 (MRASRPVVHP…KDPPGAPGTP (63 aa)) are Cytoplasmic-facing. The disordered stretch occupies residues 39–58 (AAHGGENAQPRGVRMKDPPG). The helical transmembrane segment at 64–84 (GGLGLRLVQAFFAAAALAVMA) threads the bilayer. Residues 85–94 (STDDFPSVSA) lie on the Extracellular side of the membrane. The helical transmembrane segment at 95 to 115 (FCYLVAAAILQCLWSLSLAVV) threads the bilayer. The Cytoplasmic portion of the chain corresponds to 116–139 (DIYALLVKRSLRNPQAVCIFTIGD). A helical membrane pass occupies residues 140–160 (GITGTLTLGAACASAGITVLI). Residues 161-177 (GNDLNICANNHCASFET) lie on the Extracellular side of the membrane. The helical transmembrane segment at 178–198 (ATAMAFISWFALAPSCVLNFW) threads the bilayer. The Cytoplasmic segment spans residues 199 to 203 (SMASR).

It belongs to the Casparian strip membrane proteins (CASP) family. In terms of assembly, homodimer and heterodimers.

The protein localises to the cell membrane. This is CASP-like protein 5A2 from Oryza sativa subsp. indica (Rice).